A 118-amino-acid polypeptide reads, in one-letter code: Basic phospholipase A2 nigexine (118 aa).

7 disulfides stabilise this stretch: C11–C70, C26–C117, C28–C44, C43–C98, C50–C91, C59–C84, and C77–C89. Ca(2+) is bound by residues Y27, G29, and G31. The active site involves H47. Residue D48 participates in Ca(2+) binding. A Coagulation factor Xa binding motif motif is present at residues 52 to 69 (EKAGKMGCWPYFTLYKYK). D92 is an active-site residue.

This sequence belongs to the phospholipase A2 family. Group I subfamily. D49 sub-subfamily. Ca(2+) is required as a cofactor. As to expression, expressed by the venom gland.

It is found in the secreted. It carries out the reaction a 1,2-diacyl-sn-glycero-3-phosphocholine + H2O = a 1-acyl-sn-glycero-3-phosphocholine + a fatty acid + H(+). Snake venom phospholipase A2 (PLA2) that shows anticoagulant activity, has cytotoxic activity and affects neuromuscular transmission in vitro. PLA2 catalyzes the calcium-dependent hydrolysis of the 2-acyl groups in 3-sn-phosphoglycerides. The polypeptide is Basic phospholipase A2 nigexine (Naja pallida (Red spitting cobra)).